The following is a 257-amino-acid chain: Dihydroorotate dehydrogenase B (NAD(+)), electron transfer subunit (257 aa).

The FAD-binding FR-type domain maps to M2–L102. FAD-binding positions include R53 to S56, I70 to R72, and G77 to T78. [2Fe-2S] cluster is bound by residues C221, C226, C229, and C244.

This sequence belongs to the PyrK family. In terms of assembly, heterotetramer of 2 PyrK and 2 PyrD type B subunits. It depends on [2Fe-2S] cluster as a cofactor. The cofactor is FAD.

Its pathway is pyrimidine metabolism; UMP biosynthesis via de novo pathway; orotate from (S)-dihydroorotate (NAD(+) route): step 1/1. In terms of biological role, responsible for channeling the electrons from the oxidation of dihydroorotate from the FMN redox center in the PyrD type B subunit to the ultimate electron acceptor NAD(+). The polypeptide is Dihydroorotate dehydrogenase B (NAD(+)), electron transfer subunit (Geobacillus sp. (strain WCH70)).